We begin with the raw amino-acid sequence, 155 residues long: uncharacterized protein (155 aa).

The HTH asnC-type domain occupies 4-65; the sequence is IDEIDEVIVR…VVDPSFFGEF (62 aa). The segment at residues 23–42 is a DNA-binding region (H-T-H motif); the sequence is LTELGRKVGLTASAVKNRIE.

This is an uncharacterized protein from Pyrococcus horikoshii (strain ATCC 700860 / DSM 12428 / JCM 9974 / NBRC 100139 / OT-3).